The sequence spans 603 residues: NADH-ubiquinone oxidoreductase chain 5 (603 aa).

The next 16 helical transmembrane spans lie at Y4–I24, S38–D58, M87–Y107, L122–I142, W144–A160, A171–L191, T211–L233, T241–I261, L272–A292, I301–N320, A325–I347, S370–Y390, N405–Y422, L457–T477, I482–L502, and G582–I602.

The protein belongs to the complex I subunit 5 family. As to quaternary structure, core subunit of respiratory chain NADH dehydrogenase (Complex I) which is composed of 45 different subunits.

The protein localises to the mitochondrion inner membrane. The catalysed reaction is a ubiquinone + NADH + 5 H(+)(in) = a ubiquinol + NAD(+) + 4 H(+)(out). Its function is as follows. Core subunit of the mitochondrial membrane respiratory chain NADH dehydrogenase (Complex I) which catalyzes electron transfer from NADH through the respiratory chain, using ubiquinone as an electron acceptor. Essential for the catalytic activity and assembly of complex I. In Pan troglodytes (Chimpanzee), this protein is NADH-ubiquinone oxidoreductase chain 5 (MT-ND5).